Reading from the N-terminus, the 24-residue chain is M-ectatotoxin-Eb2b (24 aa).

As to expression, expressed by the venom gland.

Its subcellular location is the secreted. Functionally, antimicrobial peptide active against Gram-negative bacterium E.coli MH1 (MIC=2.5 uM) and P.aeruginosa PAO1 (MIC=10 uM) and against Gram-positive bacterium A.globiformis VKM Ac-1112 (MIC=0.6 uM). The chain is M-ectatotoxin-Eb2b from Ectatomma brunneum (Ant).